The primary structure comprises 103 residues: Small ribosomal subunit protein uS10 (103 aa).

This sequence belongs to the universal ribosomal protein uS10 family. As to quaternary structure, part of the 30S ribosomal subunit.

In terms of biological role, involved in the binding of tRNA to the ribosomes. The polypeptide is Small ribosomal subunit protein uS10 (Campylobacter fetus subsp. fetus (strain 82-40)).